Consider the following 239-residue polypeptide: tRNA (guanine-N(1)-)-methyltransferase (239 aa).

S-adenosyl-L-methionine is bound by residues Gly108 and 127–132; that span reads LGDYVL.

It belongs to the RNA methyltransferase TrmD family. In terms of assembly, homodimer.

The protein resides in the cytoplasm. The enzyme catalyses guanosine(37) in tRNA + S-adenosyl-L-methionine = N(1)-methylguanosine(37) in tRNA + S-adenosyl-L-homocysteine + H(+). Its function is as follows. Specifically methylates guanosine-37 in various tRNAs. This Streptococcus pneumoniae serotype 2 (strain D39 / NCTC 7466) protein is tRNA (guanine-N(1)-)-methyltransferase.